The primary structure comprises 703 residues: Polyribonucleotide nucleotidyltransferase (703 aa).

2 residues coordinate Mg(2+): aspartate 485 and aspartate 491. The 60-residue stretch at 552–611 (PRIYTLKIDQDKIRDVIGKGGAMIRSITEASDTNIEIEDDGTIKIFATERAKADIAISKI) folds into the KH domain. The region spanning 621–689 (GKTYEGKVTR…RQNRVRLSIK (69 aa)) is the S1 motif domain.

Belongs to the polyribonucleotide nucleotidyltransferase family. In terms of assembly, component of the RNA degradosome, which is a multiprotein complex involved in RNA processing and mRNA degradation. It depends on Mg(2+) as a cofactor.

The protein localises to the cytoplasm. The catalysed reaction is RNA(n+1) + phosphate = RNA(n) + a ribonucleoside 5'-diphosphate. Its function is as follows. Involved in mRNA degradation. Catalyzes the phosphorolysis of single-stranded polyribonucleotides processively in the 3'- to 5'-direction. This chain is Polyribonucleotide nucleotidyltransferase, found in Pseudoalteromonas atlantica (strain T6c / ATCC BAA-1087).